The sequence spans 291 residues: 33 kDa chaperonin (291 aa).

Cystine bridges form between Cys235–Cys237 and Cys268–Cys271.

The protein belongs to the HSP33 family. Post-translationally, under oxidizing conditions two disulfide bonds are formed involving the reactive cysteines. Under reducing conditions zinc is bound to the reactive cysteines and the protein is inactive.

The protein localises to the cytoplasm. Functionally, redox regulated molecular chaperone. Protects both thermally unfolding and oxidatively damaged proteins from irreversible aggregation. Plays an important role in the bacterial defense system toward oxidative stress. The polypeptide is 33 kDa chaperonin (Streptococcus agalactiae serotype III (strain NEM316)).